The sequence spans 173 residues: 2-C-methyl-D-erythritol 2,4-cyclodiphosphate synthase (173 aa).

Residues Asp-17 and His-19 each coordinate a divalent metal cation. Residues 17–19 (DVH) and 49–50 (HS) contribute to the 4-CDP-2-C-methyl-D-erythritol 2-phosphate site. His-57 is an a divalent metal cation binding site. Residues 76–80 (FPNTD), 147–150 (TTTE), and Arg-157 contribute to the 4-CDP-2-C-methyl-D-erythritol 2-phosphate site.

This sequence belongs to the IspF family. In terms of assembly, homotrimer. A divalent metal cation is required as a cofactor.

It catalyses the reaction 4-CDP-2-C-methyl-D-erythritol 2-phosphate = 2-C-methyl-D-erythritol 2,4-cyclic diphosphate + CMP. It functions in the pathway isoprenoid biosynthesis; isopentenyl diphosphate biosynthesis via DXP pathway; isopentenyl diphosphate from 1-deoxy-D-xylulose 5-phosphate: step 4/6. Functionally, involved in the biosynthesis of isopentenyl diphosphate (IPP) and dimethylallyl diphosphate (DMAPP), two major building blocks of isoprenoid compounds. Catalyzes the conversion of 4-diphosphocytidyl-2-C-methyl-D-erythritol 2-phosphate (CDP-ME2P) to 2-C-methyl-D-erythritol 2,4-cyclodiphosphate (ME-CPP) with a corresponding release of cytidine 5-monophosphate (CMP). The polypeptide is 2-C-methyl-D-erythritol 2,4-cyclodiphosphate synthase (Ehrlichia ruminantium (strain Welgevonden)).